The chain runs to 645 residues: Envelope glycoprotein (645 aa).

The signal sequence occupies residues methionine 1 to methionine 36. Residues alanine 37–leucine 589 are Extracellular-facing. N-linked (GlcNAc...) asparagine; by host glycosylation is found at asparagine 46 and asparagine 61. 2 disulfides stabilise this stretch: cysteine 128–cysteine 150 and cysteine 142–cysteine 155. Residues glutamine 238–serine 283 are disordered. Over residues proline 252 to arginine 275 the composition is skewed to polar residues. N-linked (GlcNAc...) asparagine; by host glycosylation is found at asparagine 270, asparagine 305, and asparagine 310. 3 disulfide bridges follow: cysteine 315–cysteine 318, cysteine 315–cysteine 542, and cysteine 534–cysteine 541. Positions cysteine 315–cysteine 318 match the CXXC motif. N-linked (GlcNAc...) asparagine; by host glycans are attached at residues asparagine 334, asparagine 337, asparagine 377, asparagine 393, and asparagine 413. A fusion peptide region spans residues isoleucine 451–valine 471. Coiled coils occupy residues leucine 479–leucine 528 and lysine 538–glycine 574. Residues leucine 517–leucine 533 form an immunosuppression region. Positions cysteine 534–cysteine 542 match the CX6CC motif. Residues isoleucine 590–isoleucine 610 form a helical membrane-spanning segment. Cysteine 609 carries the S-palmitoyl cysteine; by host lipid modification. The Cytoplasmic segment spans residues leucine 611–proline 645.

In terms of assembly, the mature envelope protein (Env) consists of a trimer of SU-TM heterodimers attached by a labile interchain disulfide bond. In terms of processing, specific enzymatic cleavages in vivo yield mature proteins. Envelope glycoproteins are synthesized as an inactive precursor that is N-glycosylated and processed likely by host cell furin or by a furin-like protease in the Golgi to yield the mature SU and TM proteins. The cleavage site between SU and TM requires the minimal sequence [KR]-X-[KR]-R. The R-peptide is released from the C-terminus of the cytoplasmic tail of the TM protein upon particle formation as a result of proteolytic cleavage by the viral protease. Cleavage of this peptide is required for TM to become fusogenic. Post-translationally, the CXXC motif is highly conserved across a broad range of retroviral envelope proteins. It is thought to participate in the formation of a labile disulfide bond possibly with the CX6CC motif present in the transmembrane protein. Isomerization of the intersubunit disulfide bond to an SU intrachain disulfide bond is thought to occur upon receptor recognition in order to allow membrane fusion. The transmembrane protein is palmitoylated. In terms of processing, the R-peptide is palmitoylated.

Its subcellular location is the virion membrane. It localises to the host cell membrane. The surface protein (SU) attaches the virus to the host cell by binding to its receptor. This interaction triggers the refolding of the transmembrane protein (TM) and is thought to activate its fusogenic potential by unmasking its fusion peptide. Fusion occurs at the host cell plasma membrane. Functionally, the transmembrane protein (TM) acts as a class I viral fusion protein. Under the current model, the protein has at least 3 conformational states: pre-fusion native state, pre-hairpin intermediate state, and post-fusion hairpin state. During viral and target cell membrane fusion, the coiled coil regions (heptad repeats) assume a trimer-of-hairpins structure, positioning the fusion peptide in close proximity to the C-terminal region of the ectodomain. The formation of this structure appears to drive apposition and subsequent fusion of viral and target cell membranes. Membranes fusion leads to delivery of the nucleocapsid into the cytoplasm. This Feline sarcoma virus (strain SM) (Sm-FeSV) protein is Envelope glycoprotein (env).